Reading from the N-terminus, the 182-residue chain is RFKKIRRLGALPGLTSKRPRSGSDLKNQLRSGKRSQYRIRLEEKQKLRFHYGLTERQLLKYVHIAGKAKGSTGRVLLQLLEMRLDNILFRLGMASTIPGARQLVNHRHILVNGHIVDIPSYRCKPRDIITTKDKQRSKALIQNYIALSPHEELPNHLTIDPFQYKGLVNQIIDSKWIGLKIN.

The S4 RNA-binding domain maps to 82 to 143 (MRLDNILFRL…KQRSKALIQN (62 aa)).

The protein belongs to the universal ribosomal protein uS4 family. Part of the 30S ribosomal subunit. Contacts protein S5. The interaction surface between S4 and S5 is involved in control of translational fidelity.

Its subcellular location is the plastid. It is found in the chloroplast. Its function is as follows. One of the primary rRNA binding proteins, it binds directly to 16S rRNA where it nucleates assembly of the body of the 30S subunit. In terms of biological role, with S5 and S12 plays an important role in translational accuracy. The chain is Small ribosomal subunit protein uS4c (rps4) from Iris domestica (Leopard lily).